The chain runs to 282 residues: Bifunctional protein FolD (282 aa).

Residues 165 to 167 (GRG), Thr192, and Val233 each bind NADP(+).

The protein belongs to the tetrahydrofolate dehydrogenase/cyclohydrolase family. In terms of assembly, homodimer.

The catalysed reaction is (6R)-5,10-methylene-5,6,7,8-tetrahydrofolate + NADP(+) = (6R)-5,10-methenyltetrahydrofolate + NADPH. The enzyme catalyses (6R)-5,10-methenyltetrahydrofolate + H2O = (6R)-10-formyltetrahydrofolate + H(+). It functions in the pathway one-carbon metabolism; tetrahydrofolate interconversion. In terms of biological role, catalyzes the oxidation of 5,10-methylenetetrahydrofolate to 5,10-methenyltetrahydrofolate and then the hydrolysis of 5,10-methenyltetrahydrofolate to 10-formyltetrahydrofolate. The protein is Bifunctional protein FolD of Mycobacterium leprae (strain Br4923).